A 359-amino-acid chain; its full sequence is ELAV-like protein 2 (359 aa).

The disordered stretch occupies residues 1 to 39; it reads METQLSNGPTCNNTANGPTTVNNNCSSPVDSGNTEDSKT. 2 RRM domains span residues 39–117 and 125–205; these read TNLI…YARP and ANLY…FANN. A Phosphoserine modification is found at S221. One can recognise an RRM 3 domain in the interval 276 to 354; the sequence is WCIFVYNLAP…RVLQVSFKTN (79 aa).

Belongs to the RRM elav family. Interacts with IGF2BP1. Interacts with MAP1B light chain LC1.

In terms of biological role, RNA-binding protein that binds to the 3' untranslated region (3'UTR) of target mRNAs. Seems to recognize a GAAA motif. Can bind to its own 3'UTR, the FOS 3'UTR and the ID 3'UTR. The sequence is that of ELAV-like protein 2 (Elavl2) from Rattus norvegicus (Rat).